A 274-amino-acid chain; its full sequence is Homeobox-leucine zipper protein HAT9 (274 aa).

A compositionally biased stretch (low complexity) spans 64 to 74; that stretch reads SSHSGVSSFSS. The interval 64-96 is disordered; that stretch reads SSHSGVSSFSSGRVVKRERDGGEESPEEEEMTE. Residues 110 to 169 constitute a DNA-binding region (homeobox); the sequence is SARKKLRLTKQQSALLEESFKDHSTLNPKQKQVLARQLNLRPRQVEVWFQNRRARTKLKQ. The tract at residues 177 to 198 is leucine-zipper; sequence LKKCCETLADENIRLQKEIQEL.

Belongs to the HD-ZIP homeobox family. Class II subfamily.

The protein resides in the nucleus. Functionally, probable transcription factor. This chain is Homeobox-leucine zipper protein HAT9 (HAT9), found in Arabidopsis thaliana (Mouse-ear cress).